Here is a 208-residue protein sequence, read N- to C-terminus: Small ribosomal subunit protein uS4 (208 aa).

Residues 30–51 are disordered; it reads KSSLEKRPYAPGQHGQRRSKIS. Residues 98–161 form the S4 RNA-binding domain; sequence RRLDNVVYRM…KNNPQVQRSI (64 aa).

This sequence belongs to the universal ribosomal protein uS4 family. In terms of assembly, part of the 30S ribosomal subunit. Contacts protein S5. The interaction surface between S4 and S5 is involved in control of translational fidelity.

In terms of biological role, one of the primary rRNA binding proteins, it binds directly to 16S rRNA where it nucleates assembly of the body of the 30S subunit. With S5 and S12 plays an important role in translational accuracy. This is Small ribosomal subunit protein uS4 from Wolinella succinogenes (strain ATCC 29543 / DSM 1740 / CCUG 13145 / JCM 31913 / LMG 7466 / NCTC 11488 / FDC 602W) (Vibrio succinogenes).